The sequence spans 355 residues: Daphnetin O-methyltransferase 1 (355 aa).

Residues aspartate 222, aspartate 242, and lysine 256 each contribute to the S-adenosyl-L-homocysteine site. Residue histidine 260 is the Proton acceptor of the active site.

It belongs to the class I-like SAM-binding methyltransferase superfamily. Cation-independent O-methyltransferase family. COMT subfamily.

It carries out the reaction 7,8-dihydroxycoumarin + S-adenosyl-L-methionine = 7-hydroxy-8-methoxycoumarin + S-adenosyl-L-homocysteine + H(+). Its pathway is aromatic compound metabolism. It participates in secondary metabolite biosynthesis. In terms of biological role, O-methyltransferase involved in the biosynthesis of coumarins natural products such as daphnetin derivatives. Catalyzes specifically the methylation of daphnetin (7,8-dihydroxycoumarin) to produce hydrangetin (7-hydroxy-8-methoxycoumarin). Probably involved in acclimation to low temperature conditions. The polypeptide is Daphnetin O-methyltransferase 1 (Secale cereale (Rye)).